The primary structure comprises 157 residues: 2-C-methyl-D-erythritol 2,4-cyclodiphosphate synthase (157 aa).

Asp-8 and His-10 together coordinate a divalent metal cation. 4-CDP-2-C-methyl-D-erythritol 2-phosphate contacts are provided by residues 8–10 (DVH) and 34–35 (HS). An a divalent metal cation-binding site is contributed by His-42. 4-CDP-2-C-methyl-D-erythritol 2-phosphate is bound by residues 56 to 58 (DIG), 61 to 65 (FPDTD), 100 to 106 (AQAPKMA), 132 to 135 (TTTE), Phe-139, and Arg-142.

Belongs to the IspF family. In terms of assembly, homotrimer. The cofactor is a divalent metal cation.

It catalyses the reaction 4-CDP-2-C-methyl-D-erythritol 2-phosphate = 2-C-methyl-D-erythritol 2,4-cyclic diphosphate + CMP. The protein operates within isoprenoid biosynthesis; isopentenyl diphosphate biosynthesis via DXP pathway; isopentenyl diphosphate from 1-deoxy-D-xylulose 5-phosphate: step 4/6. Functionally, involved in the biosynthesis of isopentenyl diphosphate (IPP) and dimethylallyl diphosphate (DMAPP), two major building blocks of isoprenoid compounds. Catalyzes the conversion of 4-diphosphocytidyl-2-C-methyl-D-erythritol 2-phosphate (CDP-ME2P) to 2-C-methyl-D-erythritol 2,4-cyclodiphosphate (ME-CPP) with a corresponding release of cytidine 5-monophosphate (CMP). This is 2-C-methyl-D-erythritol 2,4-cyclodiphosphate synthase from Pseudomonas fluorescens (strain ATCC BAA-477 / NRRL B-23932 / Pf-5).